Reading from the N-terminus, the 289-residue chain is 4-diphosphocytidyl-2-C-methyl-D-erythritol kinase (289 aa).

The active site involves K10. An ATP-binding site is contributed by 94–104 (PVAAGLAGGSS). The active site involves D136.

It belongs to the GHMP kinase family. IspE subfamily.

The catalysed reaction is 4-CDP-2-C-methyl-D-erythritol + ATP = 4-CDP-2-C-methyl-D-erythritol 2-phosphate + ADP + H(+). It participates in isoprenoid biosynthesis; isopentenyl diphosphate biosynthesis via DXP pathway; isopentenyl diphosphate from 1-deoxy-D-xylulose 5-phosphate: step 3/6. In terms of biological role, catalyzes the phosphorylation of the position 2 hydroxy group of 4-diphosphocytidyl-2C-methyl-D-erythritol. The polypeptide is 4-diphosphocytidyl-2-C-methyl-D-erythritol kinase (Bacillus licheniformis (strain ATCC 14580 / DSM 13 / JCM 2505 / CCUG 7422 / NBRC 12200 / NCIMB 9375 / NCTC 10341 / NRRL NRS-1264 / Gibson 46)).